Consider the following 349-residue polypeptide: Leukotriene B4 receptor 1 (349 aa).

Residues Met1–Leu19 are Extracellular-facing. Asn2 is a glycosylation site (N-linked (GlcNAc...) asparagine). Residues Leu20–Ser42 traverse the membrane as a helical segment. The Cytoplasmic segment spans residues Ile43 to Ala54. Residues Leu55–Leu75 traverse the membrane as a helical segment. Topologically, residues Tyr76–Arg91 are extracellular. The chain crosses the membrane as a helical span at residues Leu92 to Leu113. The Cytoplasmic portion of the chain corresponds to Asp114–Leu138. The chain crosses the membrane as a helical span at residues Ala139–His159. Residues Leu160–Arg179 are Extracellular-facing. N-linked (GlcNAc...) asparagine glycosylation is present at Asn164. Residues Ala180–Ala200 traverse the membrane as a helical segment. The Cytoplasmic segment spans residues Ser201–Arg222. A helical transmembrane segment spans residues Leu223–Leu243. At Ala244–His269 the chain is on the extracellular side. Residues Val270 to Gly290 traverse the membrane as a helical segment. At Gly291–Glu349 the chain is on the cytoplasmic side. The disordered stretch occupies residues Ser311–Glu349.

It belongs to the G-protein coupled receptor 1 family. Phosphorylated by GRK6 upon leukotriene B4 binding; which promotes desensitization.

The protein localises to the cell membrane. Receptor for extracellular ATP &gt; UTP and ADP. The activity of this receptor is mediated by G proteins which activate a phosphatidylinositol-calcium second messenger system. May be the cardiac P2Y receptor involved in the regulation of cardiac muscle contraction through modulation of L-type calcium currents. Is a receptor for leukotriene B4, a potent chemoattractant involved in inflammation and immune response. The protein is Leukotriene B4 receptor 1 (LTB4R) of Bos taurus (Bovine).